A 31-amino-acid chain; its full sequence is Photosystem II reaction center protein T (31 aa).

M1 carries the post-translational modification N-formylmethionine. Residues 3-23 form a helical membrane-spanning segment; it reads SVAYILVLTMALAVLFFAIAF.

It belongs to the PsbT family. PSII is composed of 1 copy each of membrane proteins PsbA, PsbB, PsbC, PsbD, PsbE, PsbF, PsbH, PsbI, PsbJ, PsbK, PsbL, PsbM, PsbT, PsbX, PsbY, PsbZ, Psb30/Ycf12, peripheral proteins PsbO, CyanoQ (PsbQ), PsbU, PsbV and a large number of cofactors. It forms dimeric complexes.

The protein resides in the cellular thylakoid membrane. In terms of biological role, found at the monomer-monomer interface of the photosystem II (PS II) dimer, plays a role in assembly and dimerization of PSII. PSII is a light-driven water plastoquinone oxidoreductase, using light energy to abstract electrons from H(2)O, generating a proton gradient subsequently used for ATP formation. The sequence is that of Photosystem II reaction center protein T from Synechocystis sp. (strain ATCC 27184 / PCC 6803 / Kazusa).